The primary structure comprises 463 residues: Annexin A7 (463 aa).

A compositionally biased stretch (pro residues) spans 1–18; the sequence is MSYPGYPPTGYPPFPGYP. Disordered regions lie at residues 1-34 and 77-149; these read MSYPGYPPTGYPPFPGYPPAGQESSFPTAGQYPY and SPGG…MTQG. Positions 1–143 are repeat-rich region; the sequence is MSYPGYPPTG…GGQAPYPSQP (143 aa). The 3 X 5 AA tandem repeats of G-Y-P-P-X stretch occupies residues 5–20; sequence GYPPTGYPPFPGYPPA. Residues 86-99 are compositionally biased toward gly residues; the sequence is GGQGFGAPPGGAGF. Annexin repeat units lie at residues 160-231, 232-303, 315-387, and 391-462; these read FDAM…ALFM, PSTY…SMCQ, QMAQ…TILQ, and NRPA…AIVG. K208 carries the N6-acetyllysine modification.

Belongs to the annexin family. As to quaternary structure, interacts with PDCD6.

Calcium/phospholipid-binding protein which promotes membrane fusion and is involved in exocytosis. The protein is Annexin A7 (Anxa7) of Mus musculus (Mouse).